The primary structure comprises 184 residues: Cytidylate kinase (184 aa).

Gly-8 to Thr-16 lines the ATP pocket.

The protein belongs to the cytidylate kinase family. Type 2 subfamily.

It is found in the cytoplasm. The enzyme catalyses CMP + ATP = CDP + ADP. It catalyses the reaction dCMP + ATP = dCDP + ADP. The polypeptide is Cytidylate kinase (Pyrobaculum aerophilum (strain ATCC 51768 / DSM 7523 / JCM 9630 / CIP 104966 / NBRC 100827 / IM2)).